The chain runs to 156 residues: ATP synthase subunit b (156 aa).

A helical transmembrane segment spans residues 5 to 25 (LTMIGQAIAFFIFVVFCMKYV).

The protein belongs to the ATPase B chain family. In terms of assembly, F-type ATPases have 2 components, F(1) - the catalytic core - and F(0) - the membrane proton channel. F(1) has five subunits: alpha(3), beta(3), gamma(1), delta(1), epsilon(1). F(0) has three main subunits: a(1), b(2) and c(10-14). The alpha and beta chains form an alternating ring which encloses part of the gamma chain. F(1) is attached to F(0) by a central stalk formed by the gamma and epsilon chains, while a peripheral stalk is formed by the delta and b chains.

It is found in the cell inner membrane. Its function is as follows. F(1)F(0) ATP synthase produces ATP from ADP in the presence of a proton or sodium gradient. F-type ATPases consist of two structural domains, F(1) containing the extramembraneous catalytic core and F(0) containing the membrane proton channel, linked together by a central stalk and a peripheral stalk. During catalysis, ATP synthesis in the catalytic domain of F(1) is coupled via a rotary mechanism of the central stalk subunits to proton translocation. Component of the F(0) channel, it forms part of the peripheral stalk, linking F(1) to F(0). The protein is ATP synthase subunit b of Hahella chejuensis (strain KCTC 2396).